The following is a 655-amino-acid chain: Alpha-amylase (655 aa).

Catalysis depends on glutamate 123, which acts as the Nucleophile. The Proton donor role is filled by aspartate 214.

Belongs to the glycosyl hydrolase 57 family.

The enzyme catalyses Endohydrolysis of (1-&gt;4)-alpha-D-glucosidic linkages in polysaccharides containing three or more (1-&gt;4)-alpha-linked D-glucose units.. This chain is Alpha-amylase (amyA), found in Pyrococcus abyssi (strain GE5 / Orsay).